Reading from the N-terminus, the 375-residue chain is Tyrosine--tRNA ligase (375 aa).

L-tyrosine-binding residues include Y37, Y168, Q172, D175, and Q190. Residues 251–255 (KMSKS) carry the 'KMSKS' region motif. K254 lines the ATP pocket.

This sequence belongs to the class-I aminoacyl-tRNA synthetase family. TyrS type 4 subfamily. As to quaternary structure, homodimer.

It localises to the cytoplasm. It carries out the reaction tRNA(Tyr) + L-tyrosine + ATP = L-tyrosyl-tRNA(Tyr) + AMP + diphosphate + H(+). Catalyzes the attachment of tyrosine to tRNA(Tyr) in a two-step reaction: tyrosine is first activated by ATP to form Tyr-AMP and then transferred to the acceptor end of tRNA(Tyr). The polypeptide is Tyrosine--tRNA ligase (Thermococcus kodakarensis (strain ATCC BAA-918 / JCM 12380 / KOD1) (Pyrococcus kodakaraensis (strain KOD1))).